The following is a 347-amino-acid chain: NADH-ubiquinone oxidoreductase chain 2 (347 aa).

The next 10 membrane-spanning stretches (helical) occupy residues 3–23 (PPIL…VMLS), 25–45 (HWLL…PILM), 66–86 (ASML…QWVI), 111–131 (FHFW…MILL), 149–169 (INTN…GWGG), 178–198 (IMAY…TYNP), 201–221 (MVLN…LFML), 237–257 (FPLI…LPPL), 274–294 (NMII…YFYL), and 325–345 (LLPP…MLSV).

It belongs to the complex I subunit 2 family. As to quaternary structure, core subunit of respiratory chain NADH dehydrogenase (Complex I) which is composed of 45 different subunits. Interacts with TMEM242.

The protein resides in the mitochondrion inner membrane. It carries out the reaction a ubiquinone + NADH + 5 H(+)(in) = a ubiquinol + NAD(+) + 4 H(+)(out). Core subunit of the mitochondrial membrane respiratory chain NADH dehydrogenase (Complex I) which catalyzes electron transfer from NADH through the respiratory chain, using ubiquinone as an electron acceptor. Essential for the catalytic activity and assembly of complex I. This Canis lupus familiaris (Dog) protein is NADH-ubiquinone oxidoreductase chain 2.